The chain runs to 100 residues: uncharacterized protein (100 aa).

This is an uncharacterized protein from Acidianus filamentous virus 2 (isolate Italy/Pozzuoli) (AFV-2).